The sequence spans 464 residues: MSKVVTRFAPSPTGHLHLGGARTAVFSWLLARHFGGEFVLRIEDTDMERSKQEYTDSILASMAWLGLDWDGEPVYQSRRFDLYNEYIDRLLAEGKAYWCECSPEEVEAMRETARARGLKPKYNGRCRERGLQGGEGRVVRLKAPLTGKTVFTDLVKGTIAFDNSELDDMIIRRADGSPTYNLAVVVDDATMGVTHVLRGDDHVNNTPKQILLYEALGLPVPEFGHVPMILGPDRQKLSKRHGAKAVIDYKETGLLPQALVNYLVRLGWSYGDQEKFSLDELIEKFSTDNLSRSAAGFDPEKLQWLNGQYIRETPDDQLAGLVRPFLAETGYGQIDAAFLTVAAGLYKERAHDLVELAAAMKPVLCADDALEFDAKAVEKALTAEGRGHLAALRQAFAACADFDGHTAHEVLQRYVADNGLKFKAVGPPLRVALLGAMGGPDLSAVMGLLGRERTLARLDRAAAL.

The 'HIGH' region signature appears at 10–20; sequence PSPTGHLHLGG. 4 residues coordinate Zn(2+): C99, C101, C126, and E128. A 'KMSKS' region motif is present at residues 236–240; the sequence is KLSKR. K239 provides a ligand contact to ATP.

Belongs to the class-I aminoacyl-tRNA synthetase family. Glutamate--tRNA ligase type 1 subfamily. As to quaternary structure, monomer. Requires Zn(2+) as cofactor.

It localises to the cytoplasm. The catalysed reaction is tRNA(Glu) + L-glutamate + ATP = L-glutamyl-tRNA(Glu) + AMP + diphosphate. In terms of biological role, catalyzes the attachment of glutamate to tRNA(Glu) in a two-step reaction: glutamate is first activated by ATP to form Glu-AMP and then transferred to the acceptor end of tRNA(Glu). This chain is Glutamate--tRNA ligase, found in Oleidesulfovibrio alaskensis (strain ATCC BAA-1058 / DSM 17464 / G20) (Desulfovibrio alaskensis).